The primary structure comprises 270 residues: L-aspartate dehydrogenase (270 aa).

Residues alanine 123 and asparagine 191 each contribute to the NAD(+) site. Histidine 221 is a catalytic residue.

It belongs to the L-aspartate dehydrogenase family.

It carries out the reaction L-aspartate + NADP(+) + H2O = oxaloacetate + NH4(+) + NADPH + H(+). It catalyses the reaction L-aspartate + NAD(+) + H2O = oxaloacetate + NH4(+) + NADH + H(+). The protein operates within cofactor biosynthesis; NAD(+) biosynthesis; iminoaspartate from L-aspartate (dehydrogenase route): step 1/1. Specifically catalyzes the NAD or NADP-dependent dehydrogenation of L-aspartate to iminoaspartate. The protein is L-aspartate dehydrogenase of Methanocella arvoryzae (strain DSM 22066 / NBRC 105507 / MRE50).